We begin with the raw amino-acid sequence, 391 residues long: N-acetylaspartylglutamate synthase A (391 aa).

An ATP-grasp domain is found at 115 to 300; that stretch reads FQELAGHGVP…VGGIIADYTM (186 aa). ATP-binding positions include Lys-154, 189–199, and Arg-215; that span reads QKYVKESHGKD. 3 residues coordinate Mg(2+): Asp-260, Glu-273, and Asn-275. Mn(2+) contacts are provided by Asp-260, Glu-273, and Asn-275. The residue at position 319 (Ser-319) is a Phosphoserine. Residues 341-350 show a composition bias toward polar residues; it reads TINSGSTSSE. A disordered region spans residues 341–379; it reads TINSGSTSSESEPELGEIRDSSASTMGAPPSMLPEPGYN.

It belongs to the RimK family. Requires Mg(2+) as cofactor. The cofactor is Mn(2+).

Its subcellular location is the cytoplasm. The enzyme catalyses N-acetyl-L-aspartate + L-glutamate + ATP = N-acetyl-L-aspartyl-L-glutamate + ADP + phosphate + H(+). It carries out the reaction N-acetyl-L-aspartate + 2 L-glutamate + 2 ATP = N-acetyl-L-aspartyl-L-glutamyl-L-glutamate + 2 ADP + 2 phosphate + 2 H(+). In terms of biological role, catalyzes the synthesis of N-acetyl-L-aspartyl-L-glutamate (NAAG) and N-acetyl-L-aspartyl-L-glutamyl-L-glutamate. This chain is N-acetylaspartylglutamate synthase A (RIMKLA), found in Homo sapiens (Human).